Reading from the N-terminus, the 382-residue chain is Anthranilate O-methyltransferase 1 (382 aa).

Residue Tyr-20 participates in S-adenosyl-L-homocysteine binding. Residue Gln-27 participates in anthranilate binding. Positions 61, 66, 102, 103, 146, and 147 each coordinate S-adenosyl-L-homocysteine. Trp-168 contacts anthranilate. Residues Glu-268 and Phe-270 each coordinate Mg(2+).

It belongs to the methyltransferase superfamily. Type-7 methyltransferase family. SABATH subfamily.

It catalyses the reaction anthranilate + S-adenosyl-L-methionine = O-methyl anthranilate + S-adenosyl-L-homocysteine. Functionally, methyltransferase involved in the biosynthesis of methyl anthranilate in response to stresses. Utilizes anthranilic acid as substrate, but not salicylic acid. Produces exclusively the O-methyl ester. In Zea mays (Maize), this protein is Anthranilate O-methyltransferase 1 (AAMT1).